The following is a 252-amino-acid chain: Imidazole glycerol phosphate synthase subunit HisF (252 aa).

Residues D11 and D130 contribute to the active site.

This sequence belongs to the HisA/HisF family. Heterodimer of HisH and HisF.

The protein resides in the cytoplasm. It carries out the reaction 5-[(5-phospho-1-deoxy-D-ribulos-1-ylimino)methylamino]-1-(5-phospho-beta-D-ribosyl)imidazole-4-carboxamide + L-glutamine = D-erythro-1-(imidazol-4-yl)glycerol 3-phosphate + 5-amino-1-(5-phospho-beta-D-ribosyl)imidazole-4-carboxamide + L-glutamate + H(+). Its pathway is amino-acid biosynthesis; L-histidine biosynthesis; L-histidine from 5-phospho-alpha-D-ribose 1-diphosphate: step 5/9. In terms of biological role, IGPS catalyzes the conversion of PRFAR and glutamine to IGP, AICAR and glutamate. The HisF subunit catalyzes the cyclization activity that produces IGP and AICAR from PRFAR using the ammonia provided by the HisH subunit. This Streptococcus gordonii (strain Challis / ATCC 35105 / BCRC 15272 / CH1 / DL1 / V288) protein is Imidazole glycerol phosphate synthase subunit HisF.